The sequence spans 325 residues: Bifunctional ligase/repressor BirA (325 aa).

A DNA-binding region (H-T-H motif) is located at residues 23–42; it reads GQKISDALGCSRTAVWKHIE. A BPL/LPL catalytic domain is found at 74 to 262; it reads RFGLKTEVMG…CFEKRYRDYM (189 aa). Residues Gln-118, 122 to 124, and Lys-189 each bind biotin; that span reads RGR.

This sequence belongs to the biotin--protein ligase family.

It carries out the reaction biotin + L-lysyl-[protein] + ATP = N(6)-biotinyl-L-lysyl-[protein] + AMP + diphosphate + H(+). Functionally, acts both as a biotin--[acetyl-CoA-carboxylase] ligase and a repressor. This is Bifunctional ligase/repressor BirA from Bacillus spizizenii (strain ATCC 23059 / NRRL B-14472 / W23) (Bacillus subtilis subsp. spizizenii).